We begin with the raw amino-acid sequence, 522 residues long: Alanine aminotransferase 2 (522 aa).

N6-(pyridoxal phosphate)lysine is present on K340. K414, K504, and K511 each carry N6-acetyllysine.

It belongs to the class-I pyridoxal-phosphate-dependent aminotransferase family. Alanine aminotransferase subfamily. In terms of assembly, homodimer. Requires pyridoxal 5'-phosphate as cofactor. Specifically induced in fatty liver. Highly expressed in muscle, liver and white adipose tissue. Moderately expressed in brain and kidney and expressed at low levels in the heart.

It carries out the reaction L-alanine + 2-oxoglutarate = pyruvate + L-glutamate. The protein operates within amino-acid degradation; L-alanine degradation via transaminase pathway; pyruvate from L-alanine: step 1/1. In terms of biological role, catalyzes the reversible transamination between alanine and 2-oxoglutarate to form pyruvate and glutamate. In Mus musculus (Mouse), this protein is Alanine aminotransferase 2 (Gpt2).